The following is a 485-amino-acid chain: NADH-quinone oxidoreductase subunit N (485 aa).

14 consecutive transmembrane segments (helical) span residues 8–28, 35–55, 71–91, 105–125, 127–147, 159–179, 203–223, 235–255, 271–291, 297–317, 326–346, 373–393, 408–430, and 455–475; these read LIALLPLLIVGLTVVVVMLSI, FLNATLSVIGLNAALVSLWFV, GFAMLYTGLVLLASLATCTFA, FYLLVLIAALGGILLANANHL, SLFLGIELISLPLFGLVGYAF, YTILSAAASSFLLFGMALVYA, LLAGFGLMIVGLGFKLSLVPF, PAPVSTFLATASKIAIFGVVM, VVLAIIAFASIIFGNLMALSQ, LLGYSSISHLGYLLVALIALQ, VGVYLAGYLFSSLGAFGVVSL, AAVMTVMMLSLAGIPMTLGFI, WWLVGAVVVGSASGLYYYLRVAV, and IVVLISALLVLVLGVWPQPLI.

This sequence belongs to the complex I subunit 2 family. As to quaternary structure, NDH-1 is composed of 13 different subunits. Subunits NuoA, H, J, K, L, M, N constitute the membrane sector of the complex.

The protein resides in the cell inner membrane. The catalysed reaction is a quinone + NADH + 5 H(+)(in) = a quinol + NAD(+) + 4 H(+)(out). NDH-1 shuttles electrons from NADH, via FMN and iron-sulfur (Fe-S) centers, to quinones in the respiratory chain. The immediate electron acceptor for the enzyme in this species is believed to be ubiquinone. Couples the redox reaction to proton translocation (for every two electrons transferred, four hydrogen ions are translocated across the cytoplasmic membrane), and thus conserves the redox energy in a proton gradient. This chain is NADH-quinone oxidoreductase subunit N, found in Shigella sonnei (strain Ss046).